The following is a 197-amino-acid chain: Holliday junction branch migration complex subunit RuvA (197 aa).

The tract at residues 1–64 (MYEYIKGKYI…EDFIGIYGFL (64 aa)) is domain I. The domain II stretch occupies residues 65–143 (TKDELSMFKL…IDISEEDDEQ (79 aa)). The segment at 144-148 (IINKV) is flexible linker. Residues 149–197 (TDDKKVLEAVAALVTLGYSEKEASKVINLCDKNNSLEQIIKEALKHLMK) are domain III.

The protein belongs to the RuvA family. Homotetramer. Forms an RuvA(8)-RuvB(12)-Holliday junction (HJ) complex. HJ DNA is sandwiched between 2 RuvA tetramers; dsDNA enters through RuvA and exits via RuvB. An RuvB hexamer assembles on each DNA strand where it exits the tetramer. Each RuvB hexamer is contacted by two RuvA subunits (via domain III) on 2 adjacent RuvB subunits; this complex drives branch migration. In the full resolvosome a probable DNA-RuvA(4)-RuvB(12)-RuvC(2) complex forms which resolves the HJ.

It is found in the cytoplasm. The RuvA-RuvB-RuvC complex processes Holliday junction (HJ) DNA during genetic recombination and DNA repair, while the RuvA-RuvB complex plays an important role in the rescue of blocked DNA replication forks via replication fork reversal (RFR). RuvA specifically binds to HJ cruciform DNA, conferring on it an open structure. The RuvB hexamer acts as an ATP-dependent pump, pulling dsDNA into and through the RuvAB complex. HJ branch migration allows RuvC to scan DNA until it finds its consensus sequence, where it cleaves and resolves the cruciform DNA. In Clostridium botulinum (strain Loch Maree / Type A3), this protein is Holliday junction branch migration complex subunit RuvA.